Consider the following 153-residue polypeptide: Transcriptional repressor NrdR (153 aa).

A zinc finger spans residues 3–34 (CPFCNHLHDKVVDSRESKEGDAIRRRRECLEC). The ATP-cone domain occupies 49-139 (YMVVKKDGRR…VYRDFQDEQA (91 aa)).

This sequence belongs to the NrdR family. Zn(2+) serves as cofactor.

Its function is as follows. Negatively regulates transcription of bacterial ribonucleotide reductase nrd genes and operons by binding to NrdR-boxes. The chain is Transcriptional repressor NrdR from Solibacter usitatus (strain Ellin6076).